A 606-amino-acid chain; its full sequence is Maternal effect protein oskar (606 aa).

Residues 152-221 form the HTH OST-type domain; sequence EYPDIDSEVR…SGKRIFNLKA (70 aa). Phosphoserine is present on residues serine 270 and serine 275. Positions 425–439 are leucine-zipper; the sequence is LMGDDFMLYLARMEL.

Interacts with smaug (smg). As to quaternary structure, interacts with yl/yolkless. As to expression, begins to accumulate at the posterior pole of the oocyte from stage 8 onwards.

The protein localises to the endosome. Functionally, organizes the germ plasm and directs localization of the posterior determinant nanos. Oskar protein is required to keep nanos (nos) RNA and staufen protein at the posterior pole. The polypeptide is Maternal effect protein oskar (osk) (Drosophila melanogaster (Fruit fly)).